The primary structure comprises 106 residues: Large ribosomal subunit protein uL24 (106 aa).

It belongs to the universal ribosomal protein uL24 family. Part of the 50S ribosomal subunit.

One of two assembly initiator proteins, it binds directly to the 5'-end of the 23S rRNA, where it nucleates assembly of the 50S subunit. Its function is as follows. One of the proteins that surrounds the polypeptide exit tunnel on the outside of the subunit. In Paracidovorax citrulli (strain AAC00-1) (Acidovorax citrulli), this protein is Large ribosomal subunit protein uL24.